A 105-amino-acid polypeptide reads, in one-letter code: Plastocyanin (105 aa).

A Plastocyanin-like domain is found at E1 to G105. 4 residues coordinate Cu(2+): H39, C89, H92, and M97.

It belongs to the plastocyanin family. It depends on Cu(2+) as a cofactor.

The protein localises to the cellular thylakoid membrane. Functionally, participates in electron transfer between P700 and the cytochrome b6-f complex in photosystem I. In Anabaena variabilis, this protein is Plastocyanin (petE).